The primary structure comprises 207 residues: Small ribosomal subunit protein uS4c (207 aa).

Residues 92–156 (MRLDNILFRL…YQSIITKRIE (65 aa)) enclose the S4 RNA-binding domain.

It belongs to the universal ribosomal protein uS4 family. As to quaternary structure, part of the 30S ribosomal subunit. Contacts protein S5. The interaction surface between S4 and S5 is involved in control of translational fidelity.

Its subcellular location is the plastid. The protein resides in the chloroplast. In terms of biological role, one of the primary rRNA binding proteins, it binds directly to 16S rRNA where it nucleates assembly of the body of the 30S subunit. With S5 and S12 plays an important role in translational accuracy. The polypeptide is Small ribosomal subunit protein uS4c (rps4) (Equisetum sylvaticum (Wood horsetail)).